Here is a 134-residue protein sequence, read N- to C-terminus: Small ribosomal subunit protein uS11 (134 aa).

The protein belongs to the universal ribosomal protein uS11 family. As to quaternary structure, component of the small ribosomal subunit.

The protein localises to the cytoplasm. In Encephalitozoon cuniculi (strain GB-M1) (Microsporidian parasite), this protein is Small ribosomal subunit protein uS11 (RPS14).